A 96-amino-acid chain; its full sequence is Co-chaperonin GroES (96 aa).

This sequence belongs to the GroES chaperonin family. As to quaternary structure, heptamer of 7 subunits arranged in a ring. Interacts with the chaperonin GroEL.

The protein resides in the cytoplasm. Functionally, together with the chaperonin GroEL, plays an essential role in assisting protein folding. The GroEL-GroES system forms a nano-cage that allows encapsulation of the non-native substrate proteins and provides a physical environment optimized to promote and accelerate protein folding. GroES binds to the apical surface of the GroEL ring, thereby capping the opening of the GroEL channel. This is Co-chaperonin GroES from Halorhodospira halophila (strain DSM 244 / SL1) (Ectothiorhodospira halophila (strain DSM 244 / SL1)).